Here is a 953-residue protein sequence, read N- to C-terminus: 26S proteasome non-ATPase regulatory subunit 1 (953 aa).

Position 1 is an N-acetylmethionine (Met1). At Thr273 the chain carries Phosphothreonine. Positions 277–319 (SVPGSTNTGTVPGSEKDSDPMETEEKTASAVAGKTPDASPEPK) are disordered. Ser290 carries the post-translational modification Phosphoserine. Residues 290 to 303 (SEKDSDPMETEEKT) are compositionally biased toward basic and acidic residues. Residue Lys310 is modified to N6-acetyllysine. Thr311 carries the post-translational modification Phosphothreonine. Ser315 is modified (phosphoserine). PC repeat units follow at residues 403–436 (TATA…PGSA), 441–474 (GGLY…DIVR), 476–510 (GGSL…VTGE), 511–545 (AAGL…EKIL), 547–580 (GLAV…ILRR), 581–616 (SGMY…DVRR), 617–649 (AAVE…PHVR), 651–685 (GAAM…YVRQ), 686–726 (GALI…DVMA), and 729–761 (GAIL…PSVV). An N6-acetyllysine modification is found at Lys720. At Thr830 the chain carries Phosphothreonine. Ser834 carries the phosphoserine modification. Disordered stretches follow at residues 839–881 (AKKK…LDNP) and 930–953 (AHGP…YIDD). Composition is skewed to basic and acidic residues over residues 842–852 (KEKEKEKKEEE) and 859–872 (AEKK…KEPE). A compositionally biased stretch (acidic residues) spans 936-953 (EEEEQEPEPPEPFEYIDD).

Belongs to the proteasome subunit S1 family. As to quaternary structure, component of the 19S proteasome regulatory particle complex. The 26S proteasome consists of a 20S core particle (CP) and two 19S regulatory subunits (RP). The regulatory particle is made of a lid composed of 9 subunits, a base containing 6 ATPases and few additional components including PSMD1. Interacts with ADRM1. Interacts with ZFAND1.

In terms of biological role, component of the 26S proteasome, a multiprotein complex involved in the ATP-dependent degradation of ubiquitinated proteins. This complex plays a key role in the maintenance of protein homeostasis by removing misfolded or damaged proteins, which could impair cellular functions, and by removing proteins whose functions are no longer required. Therefore, the proteasome participates in numerous cellular processes, including cell cycle progression, apoptosis, or DNA damage repair. The polypeptide is 26S proteasome non-ATPase regulatory subunit 1 (Psmd1) (Mus musculus (Mouse)).